The following is a 357-amino-acid chain: Protein RecA (357 aa).

67–74 (GPESSGKT) is a binding site for ATP.

This sequence belongs to the RecA family.

It is found in the cytoplasm. Can catalyze the hydrolysis of ATP in the presence of single-stranded DNA, the ATP-dependent uptake of single-stranded DNA by duplex DNA, and the ATP-dependent hybridization of homologous single-stranded DNAs. It interacts with LexA causing its activation and leading to its autocatalytic cleavage. In Shewanella oneidensis (strain ATCC 700550 / JCM 31522 / CIP 106686 / LMG 19005 / NCIMB 14063 / MR-1), this protein is Protein RecA.